The primary structure comprises 130 residues: Small ribosomal subunit protein uS11c (130 aa).

It belongs to the universal ribosomal protein uS11 family. As to quaternary structure, part of the 30S ribosomal subunit.

It is found in the plastid. The protein localises to the chloroplast. The polypeptide is Small ribosomal subunit protein uS11c (Porphyra purpurea (Red seaweed)).